A 122-amino-acid chain; its full sequence is Large ribosomal subunit protein uL18 (122 aa).

The disordered stretch occupies residues 1-24 (MSTLSRKQQTQKRHRRLRRHLSGT). Residues 9–21 (QTQKRHRRLRRHL) are compositionally biased toward basic residues.

Belongs to the universal ribosomal protein uL18 family. As to quaternary structure, part of the 50S ribosomal subunit; part of the 5S rRNA/L5/L18/L25 subcomplex. Contacts the 5S and 23S rRNAs.

Its function is as follows. This is one of the proteins that bind and probably mediate the attachment of the 5S RNA into the large ribosomal subunit, where it forms part of the central protuberance. This chain is Large ribosomal subunit protein uL18, found in Synechococcus sp. (strain WH7803).